The primary structure comprises 146 residues: Hemoglobin subunit delta (146 aa).

The Globin domain maps to 2-146 (HLTGEEKSAV…VATALAHKYH (145 aa)). Residues H63 and H92 each contribute to the heme b site.

The protein belongs to the globin family. As to quaternary structure, heterotetramer of two delta chains and two alpha chains. Red blood cells.

This Ateles fusciceps (Brown-headed spider monkey) protein is Hemoglobin subunit delta (HBD).